A 471-amino-acid polypeptide reads, in one-letter code: tRNA-2-methylthio-N(6)-dimethylallyladenosine synthase (471 aa).

One can recognise an MTTase N-terminal domain in the interval 33–151 (KKYMITTYGC…FPELLSRSME (119 aa)). [4Fe-4S] cluster-binding residues include C42, C78, C112, C188, C192, and C195. Residues 174–404 (RKYDLKGFIN…LDKVNEISAE (231 aa)) enclose the Radical SAM core domain. The 64-residue stretch at 407 to 470 (QSYLNKVVEV…TFSLNGEVIQ (64 aa)) folds into the TRAM domain.

Belongs to the methylthiotransferase family. MiaB subfamily. Monomer. The cofactor is [4Fe-4S] cluster.

The protein resides in the cytoplasm. It catalyses the reaction N(6)-dimethylallyladenosine(37) in tRNA + (sulfur carrier)-SH + AH2 + 2 S-adenosyl-L-methionine = 2-methylsulfanyl-N(6)-dimethylallyladenosine(37) in tRNA + (sulfur carrier)-H + 5'-deoxyadenosine + L-methionine + A + S-adenosyl-L-homocysteine + 2 H(+). Catalyzes the methylthiolation of N6-(dimethylallyl)adenosine (i(6)A), leading to the formation of 2-methylthio-N6-(dimethylallyl)adenosine (ms(2)i(6)A) at position 37 in tRNAs that read codons beginning with uridine. The protein is tRNA-2-methylthio-N(6)-dimethylallyladenosine synthase of Alkaliphilus oremlandii (strain OhILAs) (Clostridium oremlandii (strain OhILAs)).